The sequence spans 250 residues: Isoprenyl transferase (250 aa).

Asp27 is a catalytic residue. Asp27 contacts Mg(2+). Residues 28–31 (GNRR), Trp32, His48, and 76–78 (STE) contribute to the substrate site. Residue Asn79 is the Proton acceptor of the active site. Substrate-binding positions include Phe80, Arg82, Arg199, and 205-207 (RVS). Glu218 provides a ligand contact to Mg(2+).

This sequence belongs to the UPP synthase family. As to quaternary structure, homodimer. Requires Mg(2+) as cofactor.

In terms of biological role, catalyzes the condensation of isopentenyl diphosphate (IPP) with allylic pyrophosphates generating different type of terpenoids. In Chlamydia caviae (strain ATCC VR-813 / DSM 19441 / 03DC25 / GPIC) (Chlamydophila caviae), this protein is Isoprenyl transferase.